The following is a 239-amino-acid chain: MNVLILTGAGISAESGIPTFRDANGLWEGHAVEEVATPQGFARNPNLVHEFYNQRRRALLNPEIQPNAAHVALADFEREHLENGRGDFLLVTQNIDNLHQRAGSQNVLAMHGQLLQVRCVYSEEIFDWTGDLSVDTPHPEAPDDDSMRGCLRPNVVWFGEMPIGLTQIEKAATKADLFIAIGTSGVVYPAAGIVAQTPPHCRRIEVNLDDTPASSAFDETIRGAASVEIPKLLNHFSAM.

Residues 1–239 (MNVLILTGAG…PKLLNHFSAM (239 aa)) enclose the Deacetylase sirtuin-type domain. 8–27 (GAGISAESGIPTFRDANGLW) is an NAD(+) binding site. Substrate contacts are provided by Tyr52 and Arg55. 93 to 96 (QNID) contributes to the NAD(+) binding site. The Proton acceptor role is filled by His111. NAD(+)-binding positions include 182 to 184 (GTS), 207 to 209 (NLD), and Ala225.

It belongs to the sirtuin family. Class III subfamily.

The protein resides in the cytoplasm. The catalysed reaction is N(6)-acetyl-L-lysyl-[protein] + NAD(+) + H2O = 2''-O-acetyl-ADP-D-ribose + nicotinamide + L-lysyl-[protein]. It carries out the reaction N(6)-succinyl-L-lysyl-[protein] + NAD(+) + H2O = 2''-O-succinyl-ADP-D-ribose + nicotinamide + L-lysyl-[protein]. In terms of biological role, NAD-dependent lysine deacetylase and desuccinylase that specifically removes acetyl and succinyl groups on target proteins. Modulates the activities of several proteins which are inactive in their acylated form. The sequence is that of NAD-dependent protein deacylase from Rhodopirellula baltica (strain DSM 10527 / NCIMB 13988 / SH1).